A 1468-amino-acid chain; its full sequence is DNA-directed RNA polymerase subunit beta (1468 aa).

Belongs to the RNA polymerase beta chain family. In terms of assembly, the RNAP catalytic core consists of 2 alpha, 1 beta, 1 beta' and 1 omega subunit. When a sigma factor is associated with the core the holoenzyme is formed, which can initiate transcription.

The enzyme catalyses RNA(n) + a ribonucleoside 5'-triphosphate = RNA(n+1) + diphosphate. In terms of biological role, DNA-dependent RNA polymerase catalyzes the transcription of DNA into RNA using the four ribonucleoside triphosphates as substrates. This chain is DNA-directed RNA polymerase subunit beta, found in Aquifex aeolicus (strain VF5).